A 619-amino-acid polypeptide reads, in one-letter code: Chaperone protein HscA homolog (619 aa).

Belongs to the heat shock protein 70 family.

Its function is as follows. Chaperone involved in the maturation of iron-sulfur cluster-containing proteins. Has a low intrinsic ATPase activity which is markedly stimulated by HscB. This Haemophilus influenzae (strain PittEE) protein is Chaperone protein HscA homolog.